A 432-amino-acid polypeptide reads, in one-letter code: Cyclic GMP-AMP synthase (432 aa).

110-115 (QGSFQY) is a GTP binding site. 2 residues coordinate Mg(2+): Asp129 and Asp131. Arg180 contributes to the ATP binding site. Asp191 lines the Mg(2+) pocket. Ser255 lines the ATP pocket. Lys283, Ser297, and Asp344 together coordinate GTP. Positions 413–432 (LNAPSKEPSSKPINKTMVSG) are disordered. The span at 423–432 (KPINKTMVSG) shows a compositional bias: polar residues.

The protein belongs to the CD-NTase family. A01 subfamily. Requires Mg(2+) as cofactor.

The catalysed reaction is GTP + ATP = 3',3'-cGAMP + 2 diphosphate. In terms of biological role, cyclic nucleotide synthase (second messenger synthase) of a CBASS antivirus system. CBASS (cyclic oligonucleotide-based antiphage signaling system) provides immunity against bacteriophage. The CD-NTase protein synthesizes cyclic nucleotides in response to infection; these serve as specific second messenger signals. The signals activate a diverse range of effectors, leading to bacterial cell death and thus abortive phage infection. A type II-C(GA) CBASS system. Functionally, catalyzes the synthesis of 3'3'-cyclic GMP-AMP (3'3'-cGAMP) from GTP and ATP, a second messenger in cell signal transduction. Is also able to produce c-di-AMP and c-di-GMP from ATP and GTP, respectively; however, 3'3'-cGAMP is the dominant molecule produced by DncV in vivo, contrary to the 2'3'-cGAMP produced by eukaryotes. By producing cGAMP, down-regulates csgD expression and expression of flagellum regulon genes, which leads to the down-regulation of rdar biofilm formation and flagellum-mediated swimming and swarming motility in a temperature-dependent manner. Controls the activity of cGAMP-activated phospholipase CapV, a patatin-like lipase that is a direct 3',3'-cGAMP receptor encoded in the dncV operon. This chain is Cyclic GMP-AMP synthase, found in Escherichia coli.